Here is a 435-residue protein sequence, read N- to C-terminus: Enolase (435 aa).

Q167 serves as a coordination point for (2R)-2-phosphoglycerate. The active-site Proton donor is the E209. Mg(2+) is bound by residues D246, E291, and D318. 4 residues coordinate (2R)-2-phosphoglycerate: K343, R372, S373, and K394. K343 functions as the Proton acceptor in the catalytic mechanism.

It belongs to the enolase family. In terms of assembly, component of the RNA degradosome, a multiprotein complex involved in RNA processing and mRNA degradation. It depends on Mg(2+) as a cofactor.

It is found in the cytoplasm. The protein resides in the secreted. Its subcellular location is the cell surface. It carries out the reaction (2R)-2-phosphoglycerate = phosphoenolpyruvate + H2O. It participates in carbohydrate degradation; glycolysis; pyruvate from D-glyceraldehyde 3-phosphate: step 4/5. Its function is as follows. Catalyzes the reversible conversion of 2-phosphoglycerate (2-PG) into phosphoenolpyruvate (PEP). It is essential for the degradation of carbohydrates via glycolysis. The protein is Enolase of Psychromonas ingrahamii (strain DSM 17664 / CCUG 51855 / 37).